A 129-amino-acid polypeptide reads, in one-letter code: Small ribosomal subunit protein uS9 (129 aa).

It belongs to the universal ribosomal protein uS9 family.

This chain is Small ribosomal subunit protein uS9, found in Chlorobium phaeobacteroides (strain DSM 266 / SMG 266 / 2430).